Here is a 377-residue protein sequence, read N- to C-terminus: DNA-directed RNA polymerase subunit alpha (377 aa).

An alpha N-terminal domain (alpha-NTD) region spans residues 1–259; the sequence is MSDSSHNLLY…KHFSVFEKMD (259 aa). The tract at residues 276-377 is alpha C-terminal domain (alpha-CTD); sequence KDDILHKLVL…KIRSSKNTKG (102 aa).

The protein belongs to the RNA polymerase alpha chain family. In terms of assembly, homodimer. The RNAP catalytic core consists of 2 alpha, 1 beta, 1 beta' and 1 omega subunit. When a sigma factor is associated with the core the holoenzyme is formed, which can initiate transcription.

The catalysed reaction is RNA(n) + a ribonucleoside 5'-triphosphate = RNA(n+1) + diphosphate. In terms of biological role, DNA-dependent RNA polymerase catalyzes the transcription of DNA into RNA using the four ribonucleoside triphosphates as substrates. This Chlamydia trachomatis serovar D (strain ATCC VR-885 / DSM 19411 / UW-3/Cx) protein is DNA-directed RNA polymerase subunit alpha.